The primary structure comprises 1482 residues: Lysine-specific demethylase rbr-2 (1482 aa).

Positions 1–45 (MRGRRQEDIATTSSAPSTSTSHKKKTVSSNGSFRPRTQSNPGGKM) are disordered. The span at 11 to 20 (TTSSAPSTST) shows a compositional bias: low complexity. A compositionally biased stretch (polar residues) spans 30-41 (NGSFRPRTQSNP). Positions 61–102 (APVYYPTSEEFADPIEYVAKIRPDAERYGVVKIVPPSDFKPP) constitute a JmjN domain. Residues 126-223 (VKEKHTFIER…HIEPFNRNLK (98 aa)) enclose the ARID domain. A disordered region spans residues 244-316 (YQHHHGTMRS…SKTEEDEEEN (73 aa)). Residues 251-264 (MRSEPENTDGKNTE) are compositionally biased toward basic and acidic residues. Positions 277-288 (GRRRSKNKKPVP) are enriched in basic residues. The PHD-type 1 zinc-finger motif lies at 322 to 374 (QVYCVSCNEGKDEDLLLLCDIEGCNSGRHTYCCDPVLDEVPEGEWRCPKCIES). One can recognise a JmjC domain in the interval 471 to 637 (QYANHAWNLN…KGRECVQSYS (167 aa)). Residues His517, Asp520, and His605 each contribute to the Fe cation site. Residues 1206-1260 (LEGCCCLGGNKSDSSESVLSCIMCESQFHVRCCEWSTFFQHLPKGCFMCVRCLRG) form a PHD-type 2 zinc finger. Residues 1361-1403 (QQRPVKSKPSASLFDPKLNSKRKRPNPSQKDSSKSKSRKRQGQ) are disordered. The PHD-type 3 zinc finger occupies 1416–1471 (FKSCQARSCLKPFGDSVNWVMCDAGCKNWFHVICVGFTLREINDMHEYRCSSCLDH).

Belongs to the JARID1 histone demethylase family. Fe(2+) serves as cofactor.

It is found in the nucleus. The catalysed reaction is N(6),N(6),N(6)-trimethyl-L-lysyl(4)-[histone H3] + 3 2-oxoglutarate + 3 O2 = L-lysyl(4)-[histone H3] + 3 formaldehyde + 3 succinate + 3 CO2. In terms of biological role, histone demethylase that specifically demethylates 'Lys-4' of histone H3, thereby playing a central role in histone code. Does not demethylate histone H3 'Lys-9', H3 'Lys-27', H3 'Lys-36', H3 'Lys-79' or H4 'Lys-20'. Demethylates trimethylated and dimethylated but not monomethylated H3 'Lys-4'. Involved in larval development and vulva formation. The protein is Lysine-specific demethylase rbr-2 (rbr-2) of Caenorhabditis briggsae.